The chain runs to 138 residues: Thyrotropin subunit beta (138 aa).

The first 20 residues, 1-20 (MTAIFLMSMLFGLACGQAMS), serve as a signal peptide directing secretion. 6 disulfides stabilise this stretch: Cys-22/Cys-72, Cys-36/Cys-87, Cys-39/Cys-125, Cys-47/Cys-103, Cys-51/Cys-105, and Cys-108/Cys-115. A glycan (N-linked (GlcNAc...) asparagine) is linked at Asn-43. The propeptide occupies 133–138 (VLEFSI).

The protein belongs to the glycoprotein hormones subunit beta family. As to quaternary structure, heterodimer of a common alpha chain and a unique beta chain which confers biological specificity to thyrotropin, lutropin, follitropin and gonadotropin.

It is found in the secreted. In terms of biological role, indispensable for the control of thyroid structure and metabolism. The sequence is that of Thyrotropin subunit beta (TSHB) from Sus scrofa (Pig).